A 454-amino-acid chain; its full sequence is T-box protein VegT (454 aa).

Positions 57 to 230 (LWSQFHQEGT…HNPFAKGFRE (174 aa)) form a DNA-binding region, T-box. The segment covering 229-241 (REQERSHKRDDVL) has biased composition (basic and acidic residues). 2 disordered regions span residues 229 to 274 (REQE…ATRV) and 295 to 358 (ANQG…VPDS). Polar residues predominate over residues 308 to 325 (GVNQEQQVPTSSLNFYNK).

Forms a repression complex on the promoters of the nodal/nr1 and siamois genes with the maternal factors tcf7l1/tcf3 and pouf5.1/oct-25. Interacts (via C-terminus) with tcf7l1/tcf3 (via N-terminus). Also interacts with the other POU-domain transcription factors pou5f1.2/oct-91 and pou5f1.3/oct-60.

The protein resides in the nucleus. Its function is as follows. Transcription factor required for both mesoderm and endoderm formation in the embryo; signaling determinants and concentration levels may determine which germ layer is formed. Acts together with beta-catenin to activate genes that are responsible for mesoderm induction including wnt-8, eomes t/bra, siamois, mix1 and sox17. Directly binds to promoter DNA. Patterns the mesoderm along the dorsoventral and posterior axis. Activates siamois gene transcription when alone or in combination with beta-catenin, but inhibits siamois transcription in combination with pou5f1.1/oct-25. This is T-box protein VegT from Xenopus borealis (Kenyan clawed frog).